A 914-amino-acid chain; its full sequence is Serine/threonine kinase SAD-1 (914 aa).

The 252-residue stretch at 47–298 (YKLEKTLGKG…LADVFKHPWV (252 aa)) folds into the Protein kinase domain. ATP contacts are provided by residues 53–61 (LGKGQTGLV) and lysine 76. The active-site Proton acceptor is aspartate 169. 3 disordered regions span residues 375-551 (AQED…SPPS), 563-590 (TMNS…SGPW), and 757-914 (NSTQ…ADKV). A compositionally biased stretch (basic and acidic residues) spans 393 to 402 (PPKKRTDSSR). Residues 444-462 (RSSTRDLFGSSSSGSYSAR) are compositionally biased toward low complexity. A compositionally biased stretch (polar residues) spans 473 to 482 (ASRSTNSYHY). Over residues 495–526 (AARHVRDAQERRESRDSGRGSSRKESKDRSDK) the composition is skewed to basic and acidic residues. Composition is skewed to low complexity over residues 527 to 551 (SASS…SPPS) and 563 to 573 (TMNSTNSSTNS). Residues 574–590 (LIAGNSQTSIGSTSGPW) show a composition bias toward polar residues. The span at 780–796 (DSSVGSACSDSESNASS) shows a compositional bias: low complexity. The span at 823–837 (SMRSVGSGTANSYKS) shows a compositional bias: polar residues. Over residues 850–876 (ASSSSASNRYGPSSSSSGSYSNNADYS) the composition is skewed to low complexity. The span at 882 to 903 (SQRSNGSSAPKNQYSPGSQRSF) shows a compositional bias: polar residues.

The protein belongs to the protein kinase superfamily. CAMK Ser/Thr protein kinase family. SNF1 subfamily. Interacts with strd-1 and nab-1. Mg(2+) is required as a cofactor. Expressed in neurons. Colocalizes with strd-1 along the dorsal nerve cord.

The protein localises to the synapse. It carries out the reaction L-seryl-[protein] + ATP = O-phospho-L-seryl-[protein] + ADP + H(+). The enzyme catalyses L-threonyl-[protein] + ATP = O-phospho-L-threonyl-[protein] + ADP + H(+). Its function is as follows. Regulates both neuronal polarity and synaptic organization when bound to strd-1. Kinase activity is required for the establishment, but not the maintenance, of both processes. Binding to nab-1 is essential for role in restricting axonal fate during neuronal polarization but is not required for regulating synapse morphology. The chain is Serine/threonine kinase SAD-1 from Caenorhabditis elegans.